The chain runs to 1183 residues: SR-related and CTD-associated factor 4 (1183 aa).

The 139-residue stretch at 1-139 (MDAVNAFNQE…PLLDMAAGTS (139 aa)) folds into the CID domain. Lys-49 bears the N6-acetyllysine mark. A Phosphoserine modification is found at Ser-154. Disordered regions lie at residues 299-324 (VPVP…VQQP) and 348-561 (HHQV…QIKS). The segment covering 367 to 380 (APPPFPPMPQPGMP) has biased composition (pro residues). Residues 381–398 (QPGMAQPGLAQPGMAQPT) are compositionally biased toward low complexity. Positions 399–410 (MPQPGMPQPGMP) are enriched in pro residues. Residues 411-428 (QPGMAQPGLAQPGMAQPG) show a composition bias toward low complexity. Residues 429 to 440 (MPQPAMPQPAMP) show a composition bias toward pro residues. Residues 457–469 (PTFQSTFQPQNEP) show a composition bias toward polar residues. Over residues 488–498 (EVKRHVPESRK) the composition is skewed to basic and acidic residues. Positions 499–536 (SRSRSPKRRRSRSGSRSRRSRHRRSRSRSRDRRRHSPR) are enriched in basic residues. The segment covering 538-553 (RSQERRDREKERERRQ) has biased composition (basic and acidic residues). The 75-residue stretch at 569 to 643 (TTLWVGQLDK…KSIKIAWALN (75 aa)) folds into the RRM domain. Disordered regions lie at residues 691–722 (WKGI…IPKP), 800–858 (LPPG…SLPT), and 920–1183 (MPPH…EPPR). Ser-717 is subject to Phosphoserine. 2 stretches are compositionally biased toward pro residues: residues 800 to 823 (LPPG…PPIS) and 920 to 952 (MPPH…PPHG). The segment covering 1006-1020 (SPSQQPAPAQQQPPQ) has biased composition (low complexity). Ser-1042 carries the post-translational modification Phosphoserine. Positions 1047–1122 (VENDRERYGS…NRKEKHEVAD (76 aa)) are enriched in basic and acidic residues. Residues 1136–1145 (QVGTIDTVSE) are compositionally biased toward polar residues.

As to quaternary structure, interacts with POLR2A; via C-terminal heptapeptide repeat domain (CTD) phosphorylated at 'Ser-2' and 'Ser-5'.

Its subcellular location is the nucleus. Its function is as follows. Anti-terminator protein required to prevent early mRNA termination during transcription. Together with SCAF8, acts by suppressing the use of early, alternative poly(A) sites, thereby preventing the accumulation of non-functional truncated proteins. Mechanistically, associates with the phosphorylated C-terminal heptapeptide repeat domain (CTD) of the largest RNA polymerase II subunit (POLR2A), and subsequently binds nascent RNA upstream of early polyadenylation sites to prevent premature mRNA transcript cleavage and polyadenylation. Independently of SCAF8, also acts as a suppressor of transcriptional readthrough. This Mus musculus (Mouse) protein is SR-related and CTD-associated factor 4.